Reading from the N-terminus, the 364-residue chain is Melatonin receptor type 1B (364 aa).

The signal sequence occupies residues 1-28 (MPDNSSIANCCAASGLAARPSWPGSAEA). The Extracellular portion of the chain corresponds to 29 to 45 (EPPETPRAPWVAPMLST). Residues 46 to 66 (VVIVTTAVDFVGNLLVILSVL) form a helical membrane-spanning segment. Topologically, residues 67 to 81 (RNRKLRNAGNLFVVN) are cytoplasmic. The chain crosses the membrane as a helical span at residues 82–102 (LALADLVVALYPYPLILVAIL). Topologically, residues 103–115 (HDGWVLGEIHCKA) are extracellular. Cysteine 113 and cysteine 190 are joined by a disulfide. The helical transmembrane segment at 116–136 (SAFVMGLSVIGSVFNITAIAI) threads the bilayer. At 137 to 158 (NRYWCICHSATYHRACSQWHAP) the chain is on the cytoplasmic side. A helical transmembrane segment spans residues 159 to 179 (LYISLIWLLTLVALVPNFFVG). The Extracellular segment spans residues 180–200 (SLEYDPRIYSCTFIQTASTQY). A helical transmembrane segment spans residues 201–221 (TMAVVAIHFLLPIAVVSFCYL). The Cytoplasmic portion of the chain corresponds to 222–255 (RIWILVLQARRKAKAERKLRLRPSDLRSFLTMFA). Residues 256 to 276 (VFVVFAICWAPLNCIGLAVAI) traverse the membrane as a helical segment. The Extracellular portion of the chain corresponds to 277-287 (NPEAMALQIPE). Residues 288 to 308 (GLFVTSYFLAYFNSCLNAIVY) form a helical membrane-spanning segment. Over 309-364 (GLLNQNFRREYKRILSALWSTGRCFHDASKCHLTEDLQGPVPPAAMATIPVQEGAL) the chain is Cytoplasmic.

The protein belongs to the G-protein coupled receptor 1 family. In terms of tissue distribution, expressed in the hippocampus, kidney, and ovary.

Its subcellular location is the cell membrane. High affinity receptor for melatonin. The activity of this receptor is mediated by pertussis toxin sensitive G proteins that inhibits adenylate cyclase activity. This Rattus norvegicus (Rat) protein is Melatonin receptor type 1B.